Here is a 689-residue protein sequence, read N- to C-terminus: Ribonuclease J (689 aa).

Positions 1–88 (MTDNNQNNEN…RNYAQEELDS (88 aa)) are disordered. Basic and acidic residues predominate over residues 9-24 (ENHENSSENSKADEMR). Over residues 56–78 (HHKKEHRPNKKPNNHHKQKHAKT) the composition is skewed to basic residues. N6-acetyllysine occurs at positions 132 and 138. Residues His206, His208, Asp210, His211, His275, and Asp297 each contribute to the Zn(2+) site. N6-acetyllysine is present on residues Lys321, Lys335, and Lys395. 498-502 (HVSGH) provides a ligand contact to substrate. Residue Lys509 is modified to N6-acetyllysine. His524 provides a ligand contact to Zn(2+). N6-acetyllysine is present on residues Lys545, Lys632, and Lys647.

This sequence belongs to the metallo-beta-lactamase superfamily. RNA-metabolizing metallo-beta-lactamase-like family. Bacterial RNase J subfamily. As to quaternary structure, homodimer. Homotetramer; dimer of homodimers. Interacts with RNA helicase RhpA, might be a member of a minimal RNA degradosome complex. It depends on Zn(2+) as a cofactor. In terms of processing, acetylated on nine lysine residues. Some of the residues are acetylated by multiple different mechanisms. RimL is partially responsible for the acetylation of Lys-321, Lys-395 and Lys-647. HPB8_1270 homolog is partially responsible for the acetylation of Lys-321, Lys-395, Lys-509 and Lys-647. Acetyl-phosphate-mediated non-enzymatic acetylation pathway takes part in the acetylation of Lys-132, Lys-321, Lys-395, Lys-509 and Lys-647. Acetylation of the remaining residues Lys-138, Lys-335, Lys-545 and Lys-632 occurs by a yet undetermined mechanism. Acetylation on a number of these residues is important for growth regulation and proper cell morphology.

It localises to the cytoplasm. With respect to regulation, catalytic activity is regulated by the balance between homodimers and homotetramers, with homotetramers being the active forms of this enzyme. Acetylation allosterically regulates the homooligomerization state and hence the catalytic activity. An RNase that has 5'-3' exoribonuclease and endoribonuclease activity. Degrades 5'-monophosphorylated ssRNA and dsRNA, considerably more active on ssRNA. Association with RhpA significantly increases the dsRNase activity. Degrades RNA substrate with hairpin structures at both ends with low activity, but presence of RhpA significantly increases the activity on this substrate. Stimulates ATPase activity of RNA helicase RhpA. Involved in stabilization of mRNA but apparently not rRNA. In Helicobacter pylori (strain ATCC 700392 / 26695) (Campylobacter pylori), this protein is Ribonuclease J.